A 218-amino-acid chain; its full sequence is Redox-sensing transcriptional repressor Rex (218 aa).

The segment at residues 18–57 (LYYRFIQSLHASGKQRVSSAELSEAVKVDSATIRRDFSYF) is a DNA-binding region (H-T-H motif). 92–97 (GVGHLG) contacts NAD(+).

This sequence belongs to the transcriptional regulatory Rex family. Homodimer.

It is found in the cytoplasm. Its function is as follows. Modulates transcription in response to changes in cellular NADH/NAD(+) redox state. The polypeptide is Redox-sensing transcriptional repressor Rex (Exiguobacterium sp. (strain ATCC BAA-1283 / AT1b)).